The following is a 175-amino-acid chain: Adenine phosphoribosyltransferase (175 aa).

Belongs to the purine/pyrimidine phosphoribosyltransferase family. In terms of assembly, homodimer.

It localises to the cytoplasm. It carries out the reaction AMP + diphosphate = 5-phospho-alpha-D-ribose 1-diphosphate + adenine. It functions in the pathway purine metabolism; AMP biosynthesis via salvage pathway; AMP from adenine: step 1/1. Catalyzes a salvage reaction resulting in the formation of AMP, that is energically less costly than de novo synthesis. In Lacticaseibacillus paracasei (strain ATCC 334 / BCRC 17002 / CCUG 31169 / CIP 107868 / KCTC 3260 / NRRL B-441) (Lactobacillus paracasei), this protein is Adenine phosphoribosyltransferase.